The primary structure comprises 994 residues: Tyrosine-protein kinase Mer (994 aa).

The first 18 residues, 1-18 (MVLAPLLLGLLLLPALWS), serve as a signal peptide directing secretion. The Extracellular portion of the chain corresponds to 19 to 497 (GGTAEKWEET…TPAPGNTDSM (479 aa)). The segment at 44–78 (VNHRPFSAPHSSRDQLPPPQTGRSHPAHTAAPQVT) is disordered. Ig-like C2-type domains follow at residues 75–181 (PQVT…EIVS) and 192–268 (PYFI…LTVS). 15 N-linked (GlcNAc...) asparagine glycosylation sites follow: Asn-91, Asn-108, Asn-165, Asn-202, Asn-210, Asn-229, Asn-289, Asn-311, Asn-324, Asn-331, Asn-349, Asn-384, Asn-390, Asn-437, and Asn-449. Cys-109 and Cys-170 form a disulfide bridge. A disulfide bridge connects residues Cys-213 and Cys-257. Fibronectin type-III domains follow at residues 281–376 (PPTE…TTEG) and 381–478 (APLN…IPEH). The helical transmembrane segment at 498-518 (FIILGCFCGFILIGLILCISL) threads the bilayer. Over 519-994 (ALRRRVQETK…DSLEDSEVLM (476 aa)) the chain is Cytoplasmic. Ser-538 is modified (phosphoserine). The Protein kinase domain maps to 582–852 (LVLGKVLGEG…SVLRLQLEKL (271 aa)). ATP is bound by residues 588-596 (LGEGEFGSV) and Lys-610. Asp-718 acts as the Proton acceptor in catalysis. Phosphotyrosine; by autocatalysis is present on residues Tyr-744, Tyr-748, Tyr-749, and Tyr-867.

It belongs to the protein kinase superfamily. Tyr protein kinase family. AXL/UFO subfamily. Interacts (upon activation) with TNK2; stimulates TNK2 autophosphorylation. Interacts (via N-terminus) with extracellular ligands LGALS3, TUB, TULP1 and GAS6. Interacts with VAV1 in a phosphotyrosine-independent manner. Interacts with TIMD4; this interaction enhances TIMD4-mediated efferocytosis. Post-translationally, autophosphorylated on Tyr-744, Tyr-748 and Tyr-749 in the activation loop allowing full activity. Autophosphorylated on Tyr-867 leading to recruitment of downstream partners of the signaling cascade such as PLCG2. Expressed predominantly in the hematopoietic lineages: macrophages, NK cells, NKT cells, dendritic cells and platelets.

The protein resides in the cell membrane. The catalysed reaction is L-tyrosyl-[protein] + ATP = O-phospho-L-tyrosyl-[protein] + ADP + H(+). Receptor tyrosine kinase that transduces signals from the extracellular matrix into the cytoplasm by binding to several ligands including LGALS3, TUB, TULP1 or GAS6. Regulates many physiological processes including cell survival, migration, differentiation, and phagocytosis of apoptotic cells (efferocytosis). Ligand binding at the cell surface induces autophosphorylation of MERTK on its intracellular domain that provides docking sites for downstream signaling molecules. Following activation by ligand, interacts with GRB2 or PLCG2 and induces phosphorylation of MAPK1, MAPK2, FAK/PTK2 or RAC1. MERTK signaling plays a role in various processes such as macrophage clearance of apoptotic cells, platelet aggregation, cytoskeleton reorganization and engulfment. Functions in the retinal pigment epithelium (RPE) as a regulator of rod outer segments fragments phagocytosis. Also plays an important role in inhibition of Toll-like receptors (TLRs)-mediated innate immune response by activating STAT1, which selectively induces production of suppressors of cytokine signaling SOCS1 and SOCS3. The protein is Tyrosine-protein kinase Mer (Mertk) of Mus musculus (Mouse).